The primary structure comprises 289 residues: ATP synthase gamma chain (289 aa).

Belongs to the ATPase gamma chain family. In terms of assembly, F-type ATPases have 2 components, CF(1) - the catalytic core - and CF(0) - the membrane proton channel. CF(1) has five subunits: alpha(3), beta(3), gamma(1), delta(1), epsilon(1). CF(0) has three main subunits: a, b and c.

It localises to the cell inner membrane. Its function is as follows. Produces ATP from ADP in the presence of a proton gradient across the membrane. The gamma chain is believed to be important in regulating ATPase activity and the flow of protons through the CF(0) complex. The protein is ATP synthase gamma chain of Azorhizobium caulinodans (strain ATCC 43989 / DSM 5975 / JCM 20966 / LMG 6465 / NBRC 14845 / NCIMB 13405 / ORS 571).